The primary structure comprises 809 residues: BTB/POZ domain-containing protein At2g30600 (809 aa).

2 consecutive BTB domains span residues 211–273 (SDTV…QILE) and 351–420 (SDIK…NMED). Residues 466 to 537 (VVSSISSCKL…LMWCMKAEES (72 aa)) enclose the BACK domain.

The protein operates within protein modification; protein ubiquitination. Its function is as follows. May act as a substrate-specific adapter of an E3 ubiquitin-protein ligase complex (CUL3-RBX1-BTB) which mediates the ubiquitination and subsequent proteasomal degradation of target proteins. This is BTB/POZ domain-containing protein At2g30600 from Arabidopsis thaliana (Mouse-ear cress).